Here is a 146-residue protein sequence, read N- to C-terminus: Flagellar assembly factor FliW (146 aa).

Belongs to the FliW family. Interacts with translational regulator CsrA and flagellin(s).

It is found in the cytoplasm. In terms of biological role, acts as an anti-CsrA protein, binds CsrA and prevents it from repressing translation of its target genes, one of which is flagellin. Binds to flagellin and participates in the assembly of the flagellum. This Azoarcus sp. (strain BH72) protein is Flagellar assembly factor FliW.